We begin with the raw amino-acid sequence, 304 residues long: D-alanine--D-alanine ligase (304 aa).

The 199-residue stretch at 103–301 (KQVWLALGLP…FDDLVWRILE (199 aa)) folds into the ATP-grasp domain. Residue 132-187 (VEMLGFPVIIKPAKEGSSVGVSRVFALEHLEEAVALAARYEGELLMEQLIEGDELT) coordinates ATP. Residues D254, E268, and N270 each contribute to the Mg(2+) site.

This sequence belongs to the D-alanine--D-alanine ligase family. Mg(2+) is required as a cofactor. It depends on Mn(2+) as a cofactor.

It is found in the cytoplasm. The enzyme catalyses 2 D-alanine + ATP = D-alanyl-D-alanine + ADP + phosphate + H(+). Its pathway is cell wall biogenesis; peptidoglycan biosynthesis. Functionally, cell wall formation. The polypeptide is D-alanine--D-alanine ligase (Xylella fastidiosa (strain Temecula1 / ATCC 700964)).